The sequence spans 288 residues: Proteasome assembly chaperone 1 (288 aa).

Position 2 is an N-acetylalanine (A2). Residues 13–35 (PCRAGTEDEEEEEEGRRETPEDR) form a disordered region. Position 18 is a phosphothreonine (T18). Basic and acidic residues predominate over residues 26–35 (EGRRETPEDR). T54 carries the phosphothreonine modification. S180 is subject to Phosphoserine. K264 is modified (N6-acetyllysine).

This sequence belongs to the PSMG1 family. As to quaternary structure, forms a heterodimer with PSMG2. The PSMG1-PSMG2 heterodimer interacts directly with the PSMA5 and PSMA7 proteasome alpha subunits. Degraded by the proteasome upon completion of 20S proteasome maturation. In the adult, detected in brain, colon, leukocytes, breast and testis. Widely expressed in the fetus. Also expressed in a variety of proliferating cell lines.

It localises to the cytoplasm. The protein resides in the endoplasmic reticulum. In terms of biological role, chaperone protein which promotes assembly of the 20S proteasome as part of a heterodimer with PSMG2. The PSMG1-PSMG2 heterodimer binds to the PSMA5 and PSMA7 proteasome subunits, promotes assembly of the proteasome alpha subunits into the heteroheptameric alpha ring and prevents alpha ring dimerization. The sequence is that of Proteasome assembly chaperone 1 from Homo sapiens (Human).